The sequence spans 225 residues: Deoxyribose-phosphate aldolase (225 aa).

Residue aspartate 94 is the Proton donor/acceptor of the active site. The Schiff-base intermediate with acetaldehyde role is filled by lysine 158. The active-site Proton donor/acceptor is lysine 187.

Belongs to the DeoC/FbaB aldolase family. DeoC type 1 subfamily.

The protein localises to the cytoplasm. The enzyme catalyses 2-deoxy-D-ribose 5-phosphate = D-glyceraldehyde 3-phosphate + acetaldehyde. Its pathway is carbohydrate degradation; 2-deoxy-D-ribose 1-phosphate degradation; D-glyceraldehyde 3-phosphate and acetaldehyde from 2-deoxy-alpha-D-ribose 1-phosphate: step 2/2. Its function is as follows. Catalyzes a reversible aldol reaction between acetaldehyde and D-glyceraldehyde 3-phosphate to generate 2-deoxy-D-ribose 5-phosphate. This is Deoxyribose-phosphate aldolase from Thermococcus gammatolerans (strain DSM 15229 / JCM 11827 / EJ3).